An 874-amino-acid polypeptide reads, in one-letter code: Alanine--tRNA ligase (874 aa).

The Zn(2+) site is built by histidine 562, histidine 566, cysteine 665, and histidine 669.

This sequence belongs to the class-II aminoacyl-tRNA synthetase family. Zn(2+) is required as a cofactor.

It is found in the cytoplasm. The enzyme catalyses tRNA(Ala) + L-alanine + ATP = L-alanyl-tRNA(Ala) + AMP + diphosphate. In terms of biological role, catalyzes the attachment of alanine to tRNA(Ala) in a two-step reaction: alanine is first activated by ATP to form Ala-AMP and then transferred to the acceptor end of tRNA(Ala). Also edits incorrectly charged Ser-tRNA(Ala) and Gly-tRNA(Ala) via its editing domain. The chain is Alanine--tRNA ligase from Pseudomonas putida (strain GB-1).